Here is a 432-residue protein sequence, read N- to C-terminus: 2-oxoglutarate-dependent dioxygenase AOP2 (432 aa).

A Fe2OG dioxygenase domain is found at 281–378 (SGDDVEANDD…RYTAAIFTCP (98 aa)). The Fe cation site is built by His301, Asp303, and His358. Residue Arg369 participates in 2-oxoglutarate binding.

This sequence belongs to the iron/ascorbate-dependent oxidoreductase family. Fe(2+) serves as cofactor.

In terms of biological role, 2-oxoglutarate-dependent dioxygenase involved in glucosinolates biosynthesis. Catalyzes the conversion of methylsulfinylalkyl glucosinolates to alkenyl glucosinolates. The chain is 2-oxoglutarate-dependent dioxygenase AOP2 (AOP2) from Arabidopsis thaliana (Mouse-ear cress).